A 133-amino-acid polypeptide reads, in one-letter code: Cytidine deaminase (133 aa).

Residues 4–126 (VDWNMLRGNA…DLLPDAFGLD (123 aa)) enclose the CMP/dCMP-type deaminase domain. Position 45 to 47 (45 to 47 (NVE)) interacts with substrate. Zn(2+) is bound at residue Cys56. Residue Glu58 is the Proton donor of the active site. Zn(2+) is bound by residues Cys89 and Cys92.

This sequence belongs to the cytidine and deoxycytidylate deaminase family. As to quaternary structure, homotetramer. Requires Zn(2+) as cofactor.

It catalyses the reaction cytidine + H2O + H(+) = uridine + NH4(+). The enzyme catalyses 2'-deoxycytidine + H2O + H(+) = 2'-deoxyuridine + NH4(+). Its function is as follows. Recycles cytidine and 2-deoxycytidine for uridine and 2-deoxyuridine synthesis, respectively. Catalyzes the hydrolytic deamination of cytidine and 2-deoxycytidine to form, respectively, uridine and 2-deoxyuridine. The sequence is that of Cytidine deaminase (cdd) from Mycobacterium tuberculosis (strain CDC 1551 / Oshkosh).